Reading from the N-terminus, the 386-residue chain is MGDDLKRKILLHNLSSNNPILEKLKGGQEPNSNEEGSDSIGDLPSLKNDYKRQDNNSTNCTYIPPSQWNTYFRSNEHIKVQSRNIEFNTYYTVPSSILGPSLPVFIFHHGAGSSGLSFANLARNLGDQLNNNCCCLSFDARGHGGTKFIDAKQAQNYFRDDFVDDFHTLVEYFVSEKLKHLPTEKLSIIFIGHSLGGSICTFTYSKLSIELKKQVIGVAMFDIVEEAATLALEKVNHFLQVTPNMFSGYEEAIDWHVSHELSRLRESADIAIPALFKSTESGKVVRITNLETFRPFWRTWFSDLSKSFVSLPTCKLLILAGNDNLDRELIIGQMQGKYQLVVFQDSGHFIQEDTPRKTALTLVDFWKRNDNKNVVIKSNWGSSNKV.

The interval I20–N48 is disordered. Residues S194, D222, and H348 contribute to the active site.

This sequence belongs to the AB hydrolase superfamily.

It catalyses the reaction [phosphatase 2A protein]-C-terminal L-leucine methyl ester + H2O = [phosphatase 2A protein]-C-terminal L-leucine + methanol + H(+). Demethylates proteins that have been reversibly carboxymethylated. Demethylates the phosphatase PP2A catalytic subunit. In Candida glabrata (strain ATCC 2001 / BCRC 20586 / JCM 3761 / NBRC 0622 / NRRL Y-65 / CBS 138) (Yeast), this protein is Protein phosphatase methylesterase 1 (PPE1).